The primary structure comprises 86 residues: Small ribosomal subunit protein uS17 (86 aa).

Belongs to the universal ribosomal protein uS17 family. As to quaternary structure, part of the 30S ribosomal subunit.

One of the primary rRNA binding proteins, it binds specifically to the 5'-end of 16S ribosomal RNA. This is Small ribosomal subunit protein uS17 from Lactococcus lactis subsp. cremoris (strain SK11).